Consider the following 568-residue polypeptide: Vacuolar protein 8 (568 aa).

The N-myristoyl glycine moiety is linked to residue G2. S-palmitoyl cysteine attachment occurs at residues C4, C5, and C7. ARM repeat units follow at residues 37–74, 75–114, 116–155, 157–196, 198–237, 241–280, 282–321, 323–363, and 407–446; these read DKDN…FAEI, TEKY…NLAV, NENK…NLAT, DDNK…NMTH, GENR…NIAV, NRRK…NLAS, TGYQ…NISI, PLNE…NLAA, and DNSK…NLCS.

The protein belongs to the beta-catenin family.

The protein localises to the vacuole membrane. In terms of biological role, functions in both vacuole inheritance and protein targeting from the cytoplasm to vacuole. This chain is Vacuolar protein 8 (VAC8), found in Eremothecium gossypii (strain ATCC 10895 / CBS 109.51 / FGSC 9923 / NRRL Y-1056) (Yeast).